A 317-amino-acid polypeptide reads, in one-letter code: UAP56-interacting factor (317 aa).

At Met1 the chain carries N-acetylmethionine. The interval 1-26 (MNRFGTRLVGATATPPPPPKARSNEN) is disordered. Residue Thr14 is modified to Phosphothreonine. Position 23 is a phosphoserine (Ser23). The UAP56-binding motif signature appears at 26 to 44 (NLDKIDMSLDDIIKLNRKE). Ser60 and Ser117 each carry phosphoserine. Lys139 participates in a covalent cross-link: Glycyl lysine isopeptide (Lys-Gly) (interchain with G-Cter in SUMO1). A Glycyl lysine isopeptide (Lys-Gly) (interchain with G-Cter in SUMO2) cross-link involves residue Lys260.

Belongs to the UIF family. Interacts with DDX39B/UAP56 and NXF1; interaction with DDX39B/UAP56 and NXF1 are mutually exclusive. Interacts with SSRP1; required for its recruitment to mRNAs. Interacts with CHTOP.

The protein resides in the nucleus. Its subcellular location is the nucleoplasm. The protein localises to the nucleus speckle. Required for mRNA export from the nucleus to the cytoplasm. Acts as an adapter that uses the DDX39B/UAP56-NFX1 pathway to ensure efficient mRNA export and delivering to the nuclear pore. Associates with spliced and unspliced mRNAs simultaneously with ALYREF/THOC4. This is UAP56-interacting factor (Fyttd1) from Mus musculus (Mouse).